Consider the following 280-residue polypeptide: Tritrans,polycis-undecaprenyl-diphosphate synthase (geranylgeranyl-diphosphate specific) (280 aa).

Asp-57 is a catalytic residue. Asp-57 is a Mg(2+) binding site. Substrate contacts are provided by residues 58 to 61 (GNRR), Arg-70, His-74, and 102 to 104 (STE). Asn-105 functions as the Proton acceptor in the catalytic mechanism. Substrate is bound by residues Phe-106, Arg-108, Arg-229, and 235–237 (RIS). Position 248 (Glu-248) interacts with Mg(2+).

Belongs to the UPP synthase family. In terms of assembly, homodimer. It depends on Mg(2+) as a cofactor.

The enzyme catalyses geranylgeranyl diphosphate + 7 isopentenyl diphosphate = tri-trans,hepta-cis-undecaprenyl diphosphate + 7 diphosphate. Its function is as follows. Catalyzes the sequential condensation of isopentenyl diphosphate (IPP) with geranylgeranyl diphosphate (GGPP) to yield (2Z,6Z,10Z,14Z,18Z,22Z,26Z,30E,34E,38E)-undecaprenyl diphosphate (tritrans,heptacis-UPP). It is probably the precursor of glycosyl carrier lipids. The polypeptide is Tritrans,polycis-undecaprenyl-diphosphate synthase (geranylgeranyl-diphosphate specific) (Methanocaldococcus jannaschii (strain ATCC 43067 / DSM 2661 / JAL-1 / JCM 10045 / NBRC 100440) (Methanococcus jannaschii)).